The sequence spans 338 residues: Nucleoid-associated protein HI_0839 (338 aa).

Belongs to the YejK family.

The protein resides in the cytoplasm. Its subcellular location is the nucleoid. The chain is Nucleoid-associated protein HI_0839 from Haemophilus influenzae (strain ATCC 51907 / DSM 11121 / KW20 / Rd).